The chain runs to 397 residues: Elongation factor Tu (397 aa).

The 197-residue stretch at 10–206 (KPHVNIGTIG…AVDESIPEPQ (197 aa)) folds into the tr-type G domain. The segment at 19–26 (GHIDHGKT) is G1. A GTP-binding site is contributed by 19–26 (GHIDHGKT). Thr-26 provides a ligand contact to Mg(2+). The G2 stretch occupies residues 62 to 66 (GITIS). Residues 83–86 (DCPG) are G3. GTP is bound by residues 83–87 (DCPGH) and 138–141 (NKAD). Positions 138–141 (NKAD) are G4. Residues 176 to 178 (SAL) are G5.

The protein belongs to the TRAFAC class translation factor GTPase superfamily. Classic translation factor GTPase family. EF-Tu/EF-1A subfamily. As to quaternary structure, monomer.

It localises to the cytoplasm. It catalyses the reaction GTP + H2O = GDP + phosphate + H(+). Functionally, GTP hydrolase that promotes the GTP-dependent binding of aminoacyl-tRNA to the A-site of ribosomes during protein biosynthesis. The protein is Elongation factor Tu of Frankia casuarinae (strain DSM 45818 / CECT 9043 / HFP020203 / CcI3).